We begin with the raw amino-acid sequence, 416 residues long: Enterobactin exporter EntS (416 aa).

The Cytoplasmic segment spans residues 1 to 21 (MNKQSWLLNLSLLKTHPAFRA). A helical transmembrane segment spans residues 22–42 (VFLARFISIVSLGLLGVAVPV). Topologically, residues 43–55 (QIQMMTHSTWQVG) are periplasmic. A helical transmembrane segment spans residues 56 to 76 (LSVTLTGGAMFVGLMVGGVLA). The Cytoplasmic portion of the chain corresponds to 77–83 (DRYERKK). Residues 84–104 (VILLARGTCGIGFIGLCLNAL) form a helical membrane-spanning segment. Residues 105–109 (LPEPS) are Periplasmic-facing. A helical membrane pass occupies residues 110 to 130 (LLAIYLLGLWDGFFASLGVTA). At 131–156 (LLAATPALVGRENLMQAGAITMLTVR) the chain is on the cytoplasmic side. The chain crosses the membrane as a helical span at residues 157–177 (LGSVISPMIGGLLLATGGVAW). Position 178 (Asn-178) is a topological domain, periplasmic. The helical transmembrane segment at 179 to 199 (YGLAAAGTFITLLPLLSLPAL) threads the bilayer. Topologically, residues 200–218 (PPPPQPREHPLKSLLAGFR) are cytoplasmic. The chain crosses the membrane as a helical span at residues 219 to 239 (FLLASPLVGGIALLGGLLTMA). Topologically, residues 240–256 (SAVRVLYPALADNWQMS) are periplasmic. A helical transmembrane segment spans residues 257–277 (AAQIGFLYAAIPLGAAIGALT). Over 278–287 (SGKLAHSARP) the chain is Cytoplasmic. A helical membrane pass occupies residues 288 to 307 (GLLMLLSTLGSFLAIGLFGL). Topologically, residues 308-313 (MPMWIL) are periplasmic. A helical transmembrane segment spans residues 314 to 336 (GVVCLALFGWLSAVSSLLQYTML). At 337–356 (QTQTPEAMLGRINGLWTAQN) the chain is on the cytoplasmic side. A helical transmembrane segment spans residues 357-377 (VTGDAIGAALLGGLGAMMTPV). Position 378 (Ala-378) is a topological domain, periplasmic. A helical membrane pass occupies residues 379-399 (SASASGFGLLIIGVLLLLVLV). The Cytoplasmic segment spans residues 400 to 416 (ELRRFRQTPPQVTASDS).

It belongs to the major facilitator superfamily. EntS (TC 2.A.1.38) family.

It localises to the cell inner membrane. In terms of biological role, component of an export pathway for enterobactin. This is Enterobactin exporter EntS from Escherichia coli (strain 55989 / EAEC).